The following is a 333-amino-acid chain: Anthranilate phosphoribosyltransferase (333 aa).

5-phospho-alpha-D-ribose 1-diphosphate-binding positions include Gly-78, 81–82 (GD), Thr-86, 88–91 (NVST), 106–114 (KHGNYSVSS), and Ser-118. Gly-78 lines the anthranilate pocket. Residue Ser-90 coordinates Mg(2+). Residue Asn-109 participates in anthranilate binding. Arg-164 contacts anthranilate. Residues Asp-222 and Glu-223 each contribute to the Mg(2+) site.

It belongs to the anthranilate phosphoribosyltransferase family. As to quaternary structure, homodimer. Requires Mg(2+) as cofactor.

It carries out the reaction N-(5-phospho-beta-D-ribosyl)anthranilate + diphosphate = 5-phospho-alpha-D-ribose 1-diphosphate + anthranilate. It participates in amino-acid biosynthesis; L-tryptophan biosynthesis; L-tryptophan from chorismate: step 2/5. Catalyzes the transfer of the phosphoribosyl group of 5-phosphorylribose-1-pyrophosphate (PRPP) to anthranilate to yield N-(5'-phosphoribosyl)-anthranilate (PRA). The chain is Anthranilate phosphoribosyltransferase from Natronomonas pharaonis (strain ATCC 35678 / DSM 2160 / CIP 103997 / JCM 8858 / NBRC 14720 / NCIMB 2260 / Gabara) (Halobacterium pharaonis).